The primary structure comprises 92 residues: Large ribosomal subunit protein eL31 (92 aa).

This sequence belongs to the eukaryotic ribosomal protein eL31 family.

The polypeptide is Large ribosomal subunit protein eL31 (Pyrobaculum arsenaticum (strain DSM 13514 / JCM 11321 / PZ6)).